The following is a 416-amino-acid chain: Phosphoglycerate kinase 2 (416 aa).

Substrate contacts are provided by residues 28–30 (DMN), Arg-44, 65–68 (HQSR), Arg-122, and Arg-162. Residues Glu-337 and 362 to 365 (GGHI) each bind ATP.

The protein belongs to the phosphoglycerate kinase family. As to quaternary structure, monomer.

Its subcellular location is the cytoplasm. It catalyses the reaction (2R)-3-phosphoglycerate + ATP = (2R)-3-phospho-glyceroyl phosphate + ADP. It functions in the pathway carbohydrate degradation; glycolysis; pyruvate from D-glyceraldehyde 3-phosphate: step 2/5. The chain is Phosphoglycerate kinase 2 from Methanosarcina acetivorans (strain ATCC 35395 / DSM 2834 / JCM 12185 / C2A).